The following is a 119-amino-acid chain: MARFVVVPLLVLLSLFGLEAIQHPPKIQVYSRYPADNGKPNFLNCYVSGFHPSDIEVDLLKNGKKIEKVEHSDLSFSKDWSFYLLYYTEFTPNEKDEYACRVSHVTFSTPKTVKWDRNM.

The first 20 residues, 1 to 20 (MARFVVVPLLVLLSLFGLEA), serve as a signal peptide directing secretion. The Ig-like C1-type domain occupies 25–114 (PKIQVYSRYP…VTFSTPKTVK (90 aa)). C45 and C100 are oxidised to a cystine.

It belongs to the beta-2-microglobulin family. In terms of assembly, heterodimer of an alpha chain and a beta chain. Beta-2-microglobulin is the beta-chain of major histocompatibility complex class I molecules.

The protein resides in the secreted. Component of the class I major histocompatibility complex (MHC). Involved in the presentation of peptide antigens to the immune system. The sequence is that of Beta-2-microglobulin (B2M) from Saguinus bicolor bicolor (Pied bare-faced tamarin).